We begin with the raw amino-acid sequence, 248 residues long: MNVLISNDDGYLSEGIAVLARVTAEFANVRVVAPERDRSGVSNSLTLERPLQLKQAQNGFYYVNGTPTDCIHIGQSVFSDFQADFVFSGINRGANMGDDTLYSGTVAAATEAYLMGIPAVAFSLNDASGRYWATAEQALWTLLAHFFKNPPQSPILWNINIPAVAPEDVRGIKIARLGRRHHGQNVIPARNPRGEQIYWIGPVGEVSDREEGTDFGECGAGFITVTPLQIDLTAYPDMAETAAFWHAD.

D8, D9, S39, and N91 together coordinate a divalent metal cation.

Belongs to the SurE nucleotidase family. A divalent metal cation is required as a cofactor.

The protein localises to the cytoplasm. The enzyme catalyses a ribonucleoside 5'-phosphate + H2O = a ribonucleoside + phosphate. Functionally, nucleotidase that shows phosphatase activity on nucleoside 5'-monophosphates. This chain is 5'-nucleotidase SurE, found in Neisseria meningitidis serogroup B (strain ATCC BAA-335 / MC58).